The primary structure comprises 78 residues: DNA-directed RNA polymerase subunit omega (78 aa).

This sequence belongs to the RNA polymerase subunit omega family. In terms of assembly, in cyanobacteria the RNAP catalytic core is composed of 2 alpha, 1 beta, 1 beta', 1 gamma and 1 omega subunit. When a sigma factor is associated with the core the holoenzyme is formed, which can initiate transcription.

The enzyme catalyses RNA(n) + a ribonucleoside 5'-triphosphate = RNA(n+1) + diphosphate. Promotes RNA polymerase assembly. Latches the N- and C-terminal regions of the beta' subunit thereby facilitating its interaction with the beta and alpha subunits. This Prochlorococcus marinus (strain AS9601) protein is DNA-directed RNA polymerase subunit omega.